A 168-amino-acid polypeptide reads, in one-letter code: MNINDKIGIYPGTFDPITFGHLDIIKRACKLVDKLIIGVAENVNKHTAFDTKLRTSMAENEIKGLGIDADVISFNGLLVKFAKEQNASVIIRGLRAVSDFDYEFQMSWVNYKLLPEIETIFLPASEDTQFISSGFVKEIARLGEDVSKFVSKGVQNELINLNRIKNGE.

T13 contributes to the substrate binding site. Residues 13 to 14 and H21 contribute to the ATP site; that span reads TF. Substrate is bound by residues K45, L78, and R92. ATP contacts are provided by residues 93 to 95, E103, and 128 to 134; these read GLR and TQFISSG.

Belongs to the bacterial CoaD family. In terms of assembly, homohexamer. Mg(2+) is required as a cofactor.

It localises to the cytoplasm. It catalyses the reaction (R)-4'-phosphopantetheine + ATP + H(+) = 3'-dephospho-CoA + diphosphate. The protein operates within cofactor biosynthesis; coenzyme A biosynthesis; CoA from (R)-pantothenate: step 4/5. Functionally, reversibly transfers an adenylyl group from ATP to 4'-phosphopantetheine, yielding dephospho-CoA (dPCoA) and pyrophosphate. This Wolbachia sp. subsp. Drosophila simulans (strain wRi) protein is Phosphopantetheine adenylyltransferase.